We begin with the raw amino-acid sequence, 162 residues long: Peptide methionine sulfoxide reductase MsrA (162 aa).

Residue cysteine 10 is part of the active site.

The protein belongs to the MsrA Met sulfoxide reductase family.

The catalysed reaction is L-methionyl-[protein] + [thioredoxin]-disulfide + H2O = L-methionyl-(S)-S-oxide-[protein] + [thioredoxin]-dithiol. It catalyses the reaction [thioredoxin]-disulfide + L-methionine + H2O = L-methionine (S)-S-oxide + [thioredoxin]-dithiol. Has an important function as a repair enzyme for proteins that have been inactivated by oxidation. Catalyzes the reversible oxidation-reduction of methionine sulfoxide in proteins to methionine. The sequence is that of Peptide methionine sulfoxide reductase MsrA from Clostridium acetobutylicum (strain ATCC 824 / DSM 792 / JCM 1419 / IAM 19013 / LMG 5710 / NBRC 13948 / NRRL B-527 / VKM B-1787 / 2291 / W).